A 186-amino-acid chain; its full sequence is Oligoribonuclease (186 aa).

In terms of domain architecture, Exonuclease spans 12–175 (LIWIDLEMTG…DDIKDSIKEL (164 aa)). Tyr-133 is a catalytic residue.

Belongs to the oligoribonuclease family.

The protein resides in the cytoplasm. Functionally, 3'-to-5' exoribonuclease specific for small oligoribonucleotides. The protein is Oligoribonuclease of Wigglesworthia glossinidia brevipalpis.